Consider the following 259-residue polypeptide: Borneol dehydrogenase, mitochondrial (259 aa).

The N-terminal 30 residues, 1 to 30, are a transit peptide targeting the mitochondrion; sequence MASTVLRRLEGKVALITGAASGIGESAARL. NAD(+)-binding positions include 21 to 23, aspartate 42, 63 to 64, and 90 to 92; these read SGI, DV, and NAG. Serine 144 functions as the Proton donor in the catalytic mechanism. Substrate contacts are provided by serine 144 and tyrosine 157. 3 residues coordinate NAD(+): tyrosine 157, lysine 161, and threonine 192. Tyrosine 157 acts as the Proton acceptor in catalysis. Lysine 161 (proton donor/acceptor) is an active-site residue.

This sequence belongs to the short-chain dehydrogenases/reductases (SDR) family. Specifically expressed in glandular trichomes of mature flowers.

Its subcellular location is the mitochondrion. The catalysed reaction is borneol + NAD(+) = camphor + NADH + H(+). It participates in secondary metabolite biosynthesis; terpenoid biosynthesis. Functionally, involved in the biosynthesis of monoterpenes natural products related to camphor. Catalyzes the conversion of borneol into camphor. The polypeptide is Borneol dehydrogenase, mitochondrial (Lavandula x intermedia (Lavandin)).